The primary structure comprises 322 residues: HPr kinase/phosphorylase (322 aa).

Catalysis depends on residues His142 and Lys163. Position 157-164 (157-164 (GASGVGKS)) interacts with ATP. Ser164 contacts Mg(2+). The active-site Proton acceptor; for phosphorylation activity. Proton donor; for dephosphorylation activity is Asp181. The segment at 205-214 (MEIRGIGIID) is important for the catalytic mechanism of both phosphorylation and dephosphorylation. A Mg(2+)-binding site is contributed by Glu206. The active site involves Arg247. The important for the catalytic mechanism of dephosphorylation stretch occupies residues 268–273 (PVKVGR).

It belongs to the HPrK/P family. Homohexamer. It depends on Mg(2+) as a cofactor.

It catalyses the reaction [HPr protein]-L-serine + ATP = [HPr protein]-O-phospho-L-serine + ADP + H(+). It carries out the reaction [HPr protein]-O-phospho-L-serine + phosphate + H(+) = [HPr protein]-L-serine + diphosphate. Functionally, catalyzes the ATP- as well as the pyrophosphate-dependent phosphorylation of a specific serine residue in HPr, a phosphocarrier protein of the phosphoenolpyruvate-dependent sugar phosphotransferase system (PTS). HprK/P also catalyzes the pyrophosphate-producing, inorganic phosphate-dependent dephosphorylation (phosphorolysis) of seryl-phosphorylated HPr (P-Ser-HPr). The two antagonistic activities of HprK/P are regulated by several intracellular metabolites, which change their concentration in response to the absence or presence of rapidly metabolisable carbon sources (glucose, fructose, etc.) in the growth medium. Therefore, by controlling the phosphorylation state of HPr, HPrK/P is a sensor enzyme that plays a major role in the regulation of carbon metabolism and sugar transport: it mediates carbon catabolite repression (CCR), and regulates PTS-catalyzed carbohydrate uptake and inducer exclusion. This Lactobacillus acidophilus (strain ATCC 700396 / NCK56 / N2 / NCFM) protein is HPr kinase/phosphorylase.